Here is a 219-residue protein sequence, read N- to C-terminus: Lipid A acyltransferase PagP (219 aa).

The signal sequence occupies residues 1 to 28 (MRLILISHSRLFALSALFLIPTFDSLSA). The segment at 39–63 (IDRTTQSDSTTQRDSKTRRDPAPSF) is disordered. Positions 49 to 59 (TQRDSKTRRDP) are enriched in basic and acidic residues. Active-site residues include H91, D134, and S135.

The protein belongs to the lipid A palmitoyltransferase family. As to quaternary structure, homodimer.

It is found in the cell outer membrane. The catalysed reaction is a lipid A + a 1,2-diacyl-sn-glycero-3-phosphocholine = a hepta-acyl lipid A + a 2-acyl-sn-glycero-3-phosphocholine. It carries out the reaction a lipid IVA + a 1,2-diacyl-sn-glycero-3-phosphocholine = a lipid IVB + a 2-acyl-sn-glycero-3-phosphocholine. It catalyses the reaction a lipid IIA + a 1,2-diacyl-sn-glycero-3-phosphocholine = a lipid IIB + a 2-acyl-sn-glycero-3-phosphocholine. Transfers a fatty acid residue from the sn-1 position of a phospholipid to the N-linked hydroxyfatty acid chain on the proximal unit of lipid A or its precursors. This is Lipid A acyltransferase PagP from Dickeya zeae (strain Ech586) (Dickeya dadantii (strain Ech586)).